A 161-amino-acid chain; its full sequence is NADH-quinone oxidoreductase subunit I (161 aa).

2 4Fe-4S ferredoxin-type domains span residues 53–82 (RRYP…IEAE) and 92–121 (TRYD…EGPN). C62, C65, C68, C72, C101, C104, C107, and C111 together coordinate [4Fe-4S] cluster.

It belongs to the complex I 23 kDa subunit family. NDH-1 is composed of 14 different subunits. Subunits NuoA, H, J, K, L, M, N constitute the membrane sector of the complex. [4Fe-4S] cluster serves as cofactor.

The protein resides in the cell inner membrane. It catalyses the reaction a quinone + NADH + 5 H(+)(in) = a quinol + NAD(+) + 4 H(+)(out). In terms of biological role, NDH-1 shuttles electrons from NADH, via FMN and iron-sulfur (Fe-S) centers, to quinones in the respiratory chain. The immediate electron acceptor for the enzyme in this species is believed to be ubiquinone. Couples the redox reaction to proton translocation (for every two electrons transferred, four hydrogen ions are translocated across the cytoplasmic membrane), and thus conserves the redox energy in a proton gradient. This is NADH-quinone oxidoreductase subunit I from Hyphomonas neptunium (strain ATCC 15444).